Consider the following 296-residue polypeptide: 4-hydroxy-tetrahydrodipicolinate synthase (296 aa).

Threonine 50 lines the pyruvate pocket. Residue tyrosine 138 is the Proton donor/acceptor of the active site. The Schiff-base intermediate with substrate role is filled by lysine 166. Isoleucine 208 lines the pyruvate pocket.

This sequence belongs to the DapA family. In terms of assembly, homotetramer; dimer of dimers.

It is found in the cytoplasm. The enzyme catalyses L-aspartate 4-semialdehyde + pyruvate = (2S,4S)-4-hydroxy-2,3,4,5-tetrahydrodipicolinate + H2O + H(+). The protein operates within amino-acid biosynthesis; L-lysine biosynthesis via DAP pathway; (S)-tetrahydrodipicolinate from L-aspartate: step 3/4. Its function is as follows. Catalyzes the condensation of (S)-aspartate-beta-semialdehyde [(S)-ASA] and pyruvate to 4-hydroxy-tetrahydrodipicolinate (HTPA). The sequence is that of 4-hydroxy-tetrahydrodipicolinate synthase from Ruthia magnifica subsp. Calyptogena magnifica.